Reading from the N-terminus, the 435-residue chain is 3-phosphoshikimate 1-carboxyvinyltransferase (435 aa).

Lys-22, Ser-23, and Arg-27 together coordinate 3-phosphoshikimate. Lys-22 contacts phosphoenolpyruvate. Residues Gly-95 and Arg-123 each coordinate phosphoenolpyruvate. 3-phosphoshikimate is bound by residues Ser-168, Gln-170, Asp-319, and Lys-346. Gln-170 provides a ligand contact to phosphoenolpyruvate. Asp-319 acts as the Proton acceptor in catalysis. Phosphoenolpyruvate contacts are provided by Arg-350 and Arg-393.

The protein belongs to the EPSP synthase family. As to quaternary structure, monomer.

The protein localises to the cytoplasm. The enzyme catalyses 3-phosphoshikimate + phosphoenolpyruvate = 5-O-(1-carboxyvinyl)-3-phosphoshikimate + phosphate. Its pathway is metabolic intermediate biosynthesis; chorismate biosynthesis; chorismate from D-erythrose 4-phosphate and phosphoenolpyruvate: step 6/7. Functionally, catalyzes the transfer of the enolpyruvyl moiety of phosphoenolpyruvate (PEP) to the 5-hydroxyl of shikimate-3-phosphate (S3P) to produce enolpyruvyl shikimate-3-phosphate and inorganic phosphate. The sequence is that of 3-phosphoshikimate 1-carboxyvinyltransferase from Chloroflexus aurantiacus (strain ATCC 29364 / DSM 637 / Y-400-fl).